A 96-amino-acid polypeptide reads, in one-letter code: Putative pterin-4-alpha-carbinolamine dehydratase (96 aa).

Belongs to the pterin-4-alpha-carbinolamine dehydratase family.

The catalysed reaction is (4aS,6R)-4a-hydroxy-L-erythro-5,6,7,8-tetrahydrobiopterin = (6R)-L-erythro-6,7-dihydrobiopterin + H2O. This Caulobacter sp. (strain K31) protein is Putative pterin-4-alpha-carbinolamine dehydratase.